A 158-amino-acid polypeptide reads, in one-letter code: SsrA-binding protein (158 aa).

Basic and acidic residues predominate over residues 136–151 (KRADSKSRDWARDKQR). The interval 136–158 (KRADSKSRDWARDKQRIMKHSTR) is disordered.

It belongs to the SmpB family.

It localises to the cytoplasm. Its function is as follows. Required for rescue of stalled ribosomes mediated by trans-translation. Binds to transfer-messenger RNA (tmRNA), required for stable association of tmRNA with ribosomes. tmRNA and SmpB together mimic tRNA shape, replacing the anticodon stem-loop with SmpB. tmRNA is encoded by the ssrA gene; the 2 termini fold to resemble tRNA(Ala) and it encodes a 'tag peptide', a short internal open reading frame. During trans-translation Ala-aminoacylated tmRNA acts like a tRNA, entering the A-site of stalled ribosomes, displacing the stalled mRNA. The ribosome then switches to translate the ORF on the tmRNA; the nascent peptide is terminated with the 'tag peptide' encoded by the tmRNA and targeted for degradation. The ribosome is freed to recommence translation, which seems to be the essential function of trans-translation. The chain is SsrA-binding protein from Photobacterium profundum (strain SS9).